The following is a 172-amino-acid chain: Probable metallophosphoesterase MTH_1774 (172 aa).

Residues aspartate 8, histidine 10, aspartate 37, asparagine 59, histidine 85, histidine 113, and histidine 115 each coordinate a divalent metal cation.

Belongs to the metallophosphoesterase superfamily. YfcE family. It depends on a divalent metal cation as a cofactor.

The sequence is that of Probable metallophosphoesterase MTH_1774 from Methanothermobacter thermautotrophicus (strain ATCC 29096 / DSM 1053 / JCM 10044 / NBRC 100330 / Delta H) (Methanobacterium thermoautotrophicum).